The following is a 681-amino-acid chain: Envelope glycoprotein (681 aa).

The signal sequence occupies residues 1-18 (MKTTCFLISLILIQGTKN). Topologically, residues 19–648 (LPILEIASNN…GLGGKWWTSD (630 aa)) are extracellular. Cystine bridges form between cysteine 37/cysteine 610, cysteine 92/cysteine 119, cysteine 211/cysteine 226, cysteine 512/cysteine 557, and cysteine 602/cysteine 609. Residues 38-188 (SGTLQKTEDV…FSRQGQGYRH (151 aa)) are receptor-binding. N-linked (GlcNAc...) asparagine; by host glycans are attached at residues asparagine 94, asparagine 171, asparagine 190, asparagine 202, asparagine 207, asparagine 219, asparagine 223, and asparagine 255. The interval 223 to 427 (NQTCAPSKIP…PPTPSSTAQH (205 aa)) is disordered. Polar residues-rich tracts occupy residues 244 to 259 (LTST…TTDP), 281 to 290 (TSDAVTKQGL), and 308 to 318 (GGNNTNHSQDA). The tract at residues 277–455 (EPHTTSDAVT…PFLDGLINAP (179 aa)) is mucin-like region. 11 N-linked (GlcNAc...) asparagine; by host glycosylation sites follow: asparagine 310, asparagine 313, asparagine 325, asparagine 326, asparagine 337, asparagine 344, asparagine 345, asparagine 350, asparagine 360, asparagine 408, and asparagine 487. Residues 337–347 (NTTTISTNNTS) are compositionally biased toward low complexity. The span at 348-414 (KHNFSTLSAP…TAPNTTNEHF (67 aa)) shows a compositional bias: polar residues. The segment at 529–549 (GLSWIPFFGPGIEGLYTAVLI) is fusion peptide. N-linked (GlcNAc...) asparagine; by host glycosylation is present at asparagine 564. N-linked (GlcNAc...) asparagine; by host glycosylation is present at asparagine 619. The chain crosses the membrane as a helical span at residues 649–669 (WGVLTNLGILLLLSIAVLIAL). Residues 670 to 681 (SCICRIFTKYIG) lie on the Cytoplasmic side of the membrane. S-palmitoyl cysteine; by host attachment occurs at residues cysteine 671 and cysteine 673.

The protein belongs to the filoviruses glycoprotein family. As to quaternary structure, homotrimer; each monomer consists of a GP1 and a GP2 subunit linked by disulfide bonds. The resulting peplomers (GP1,2) protrude from the virus surface as spikes. GP1,2 interacts with human CD209 and CLEC4M (collectively referred to as DC-SIGN(R)). Asialoglycoprotein receptor (ASGP-R) may be a liver-specific receptor for GP1,2. Members of the Tyro3 receptor tyrosine kinase family may be cell entry factors interacting with GP1,2. Post-translationally, N-glycosylated. In terms of processing, O-glycosylated in the mucin-like region. Specific enzymatic cleavages in vivo yield mature proteins. The precursor is processed into GP1 and GP2 by host cell furin in the trans Golgi, and maybe by other host proteases, to yield the mature GP1 and GP2 proteins. The cleavage site corresponds to the furin optimal cleavage sequence [KR]-X-[KR]-R. Post-translationally, GP1 is phosphorylated on serine residues between residues 260 and 273.

The protein resides in the virion membrane. It localises to the host cell membrane. GP1 is responsible for binding to the receptor(s) on target cells. Interacts with CD209/DC-SIGN and CLEC4M/DC-SIGNR which act as cofactors for virus entry into the host cell. Binding to CD209 and CLEC4M, which are respectively found on dendritic cells (DCs), and on endothelial cells of liver sinusoids and lymph node sinuses, facilitate infection of macrophages and endothelial cells. These interactions not only facilitate virus cell entry, but also allow capture of viral particles by DCs and subsequent transmission to susceptible cells without DCs infection (trans infection). Functionally, GP2 acts as a class I viral fusion protein. Under the current model, the protein has at least 3 conformational states: pre-fusion native state, pre-hairpin intermediate state, and post-fusion hairpin state. During viral and target cell membrane fusion, the coiled coil regions (heptad repeats) assume a trimer-of-hairpins structure, positioning the fusion peptide in close proximity to the C-terminal region of the ectodomain. The formation of this structure appears to drive apposition and subsequent fusion of viral and target cell membranes. Responsible for penetration of the virus into the cell cytoplasm by mediating the fusion of the membrane of the endocytosed virus particle with the endosomal membrane. Low pH in endosomes induces an irreversible conformational change in GP2, releasing the fusion hydrophobic peptide. The polypeptide is Envelope glycoprotein (GP) (Lake Victoria marburgvirus (strain Musoke-80) (MARV)).